The chain runs to 241 residues: Triosephosphate isomerase (241 aa).

Asn-9–Lys-11 contacts substrate. Residue His-96 is the Electrophile of the active site. Glu-165 functions as the Proton acceptor in the catalytic mechanism. Substrate is bound by residues Gly-171, Ser-204, and Gly-225 to Gly-226.

It belongs to the triosephosphate isomerase family. In terms of assembly, homodimer.

It localises to the cytoplasm. It carries out the reaction D-glyceraldehyde 3-phosphate = dihydroxyacetone phosphate. The protein operates within carbohydrate biosynthesis; gluconeogenesis. It participates in carbohydrate degradation; glycolysis; D-glyceraldehyde 3-phosphate from glycerone phosphate: step 1/1. Functionally, involved in the gluconeogenesis. Catalyzes stereospecifically the conversion of dihydroxyacetone phosphate (DHAP) to D-glyceraldehyde-3-phosphate (G3P). The protein is Triosephosphate isomerase of Picosynechococcus sp. (strain ATCC 27264 / PCC 7002 / PR-6) (Agmenellum quadruplicatum).